The following is a 65-amino-acid chain: MAVAFYIPDQATLLREAEQKEQQILRLRESQWRFLATVVLETLRQYTSCHPKTGRKSGKYRKPSQ.

Interacts with Diap2 (via BIR2 domain).

Functionally, activator of apoptosis, as well as grim and hid, that acts on the effector Dredd. The protein is Cell death protein rpr (rpr) of Drosophila melanogaster (Fruit fly).